Consider the following 616-residue polypeptide: Dihydroxy-acid dehydratase (616 aa).

Asp81 contacts Mg(2+). Cys122 is a binding site for [2Fe-2S] cluster. Mg(2+) is bound by residues Asp123 and Lys124. Lys124 carries the post-translational modification N6-carboxylysine. Cys195 contributes to the [2Fe-2S] cluster binding site. A Mg(2+)-binding site is contributed by Glu491. The active-site Proton acceptor is the Ser517.

Belongs to the IlvD/Edd family. Homodimer. The cofactor is [2Fe-2S] cluster. Requires Mg(2+) as cofactor.

It carries out the reaction (2R)-2,3-dihydroxy-3-methylbutanoate = 3-methyl-2-oxobutanoate + H2O. The enzyme catalyses (2R,3R)-2,3-dihydroxy-3-methylpentanoate = (S)-3-methyl-2-oxopentanoate + H2O. The protein operates within amino-acid biosynthesis; L-isoleucine biosynthesis; L-isoleucine from 2-oxobutanoate: step 3/4. Its pathway is amino-acid biosynthesis; L-valine biosynthesis; L-valine from pyruvate: step 3/4. Functionally, functions in the biosynthesis of branched-chain amino acids. Catalyzes the dehydration of (2R,3R)-2,3-dihydroxy-3-methylpentanoate (2,3-dihydroxy-3-methylvalerate) into 2-oxo-3-methylpentanoate (2-oxo-3-methylvalerate) and of (2R)-2,3-dihydroxy-3-methylbutanoate (2,3-dihydroxyisovalerate) into 2-oxo-3-methylbutanoate (2-oxoisovalerate), the penultimate precursor to L-isoleucine and L-valine, respectively. This Escherichia coli O127:H6 (strain E2348/69 / EPEC) protein is Dihydroxy-acid dehydratase.